The following is a 237-amino-acid chain: Sugar fermentation stimulation protein homolog (237 aa).

Belongs to the SfsA family.

This Pseudomonas fluorescens (strain Pf0-1) protein is Sugar fermentation stimulation protein homolog.